The chain runs to 82 residues: Small ribosomal subunit protein bS16 (82 aa).

It belongs to the bacterial ribosomal protein bS16 family.

In Vibrio campbellii (strain ATCC BAA-1116), this protein is Small ribosomal subunit protein bS16.